A 694-amino-acid chain; its full sequence is Nuclear factor erythroid 2-related factor 3 (694 aa).

A compositionally biased stretch (low complexity) spans 133-150 (ASSTGGAGASVDGGSQAV). Disordered stretches follow at residues 133 to 256 (ASST…LNGT) and 330 to 357 (DPTA…QTLP). Composition is skewed to basic and acidic residues over residues 193 to 217 (GVLR…RVSA) and 231 to 254 (NKIA…RHLN). Over residues 333–357 (ARTSQSQEPFLQLNSHTTNPEQTLP) the composition is skewed to polar residues. The bZIP domain maps to 578–641 (LIRDIRRRGK…NIMKQKLHDL (64 aa)). The interval 580 to 599 (RDIRRRGKNKVAAQNCRKRK) is basic motif. Positions 606 to 620 (LEDDVCNLQAKKETL) are leucine-zipper.

The protein belongs to the bZIP family. CNC subfamily. As to quaternary structure, heterodimer with MAFG, MAFK and other small MAF proteins that binds to the MAF recognition elements (MARE). As to expression, highly expressed in human placenta and also in B-cell and monocyte cell lines. Low expression in heart, brain, lung, skeletal muscle, kidney and pancreas.

Its subcellular location is the nucleus. Activates erythroid-specific, globin gene expression. The sequence is that of Nuclear factor erythroid 2-related factor 3 (NFE2L3) from Homo sapiens (Human).